A 521-amino-acid chain; its full sequence is Cytochrome P450 monooxygenase bet2 (521 aa).

The helical transmembrane segment at 23–43 (SNWRFALFVAATLLTSYIVIV) threads the bilayer. N188 is a glycosylation site (N-linked (GlcNAc...) asparagine). Residue C461 participates in heme binding.

The protein belongs to the cytochrome P450 family. It depends on heme as a cofactor.

The protein localises to the membrane. It catalyses the reaction dehydroprobetaenone I + NADPH + O2 + H(+) = epoxybetaenone + NADP(+) + H2O. The enzyme catalyses dehydroprobetaenone I + 3 NADPH + 3 O2 + 3 H(+) = betaenone C + 3 NADP(+) + 3 H2O. Its pathway is mycotoxin biosynthesis. Functionally, cytochrome P450 monooxygenase; part of the gene cluster that mediates the biosynthesis of betaenones, phytotoxic polyketides involved in leaf spot disease in sugar beets. The first step of the pathway is the synthesis of dehydroprobetaenone I by the polyketide synthase bet1 and the enoyl reductase bet3 via condensation of one acetyl-CoA starter unit with 7 malonyl-CoA units and 5 methylations. The C-terminal reductase (R) domain of bet1 catalyzes the reductive release of the polyketide chain. Because bet1 lacks a designated enoylreductase (ER) domain, the required activity is provided the enoyl reductase bet3. The short-chain dehydrogenase/reductase bet4 then catalyzes reduction of dehydroprobetaenone I to probetaenone I. The cytochrome P450 monooxygenase bet2 catalyzes successive epoxidation, oxidation (resulting from epoxide opening) and hydroxylation to install a tertiary alcohol in the decaline ring to yield betaenone C from dehydroprobetaenone I and betaenone B from probetaenone I. The FAD-linked oxidoreductase (orf1) is probably responsible for the conversion of betaenone C to betaenone A via an intramolecular aldol reaction between C-1 and C-17 to form the bridged tricyclic system in betaenone A. The chain is Cytochrome P450 monooxygenase bet2 from Neocamarosporium betae (Beet black rot fungus).